A 363-amino-acid polypeptide reads, in one-letter code: Carbamoyl phosphate synthase small chain (363 aa).

The tract at residues 1 to 171 (MEDGTLFAGA…PYRIPGPGPR (171 aa)) is CPSase. Residues Ser-39, Gly-219, and Gly-221 each coordinate L-glutamine. One can recognise a Glutamine amidotransferase type-1 domain in the interval 171 to 359 (RVVAVDFGAK…LALVDRSAVS (189 aa)). Residue Cys-248 is the Nucleophile of the active site. L-glutamine-binding residues include Leu-249, Gln-252, Asn-290, Gly-292, and Tyr-293. Active-site residues include His-332 and Glu-334.

It belongs to the CarA family. In terms of assembly, composed of two chains; the small (or glutamine) chain promotes the hydrolysis of glutamine to ammonia, which is used by the large (or ammonia) chain to synthesize carbamoyl phosphate. Tetramer of heterodimers (alpha,beta)4.

It catalyses the reaction hydrogencarbonate + L-glutamine + 2 ATP + H2O = carbamoyl phosphate + L-glutamate + 2 ADP + phosphate + 2 H(+). The enzyme catalyses L-glutamine + H2O = L-glutamate + NH4(+). Its pathway is amino-acid biosynthesis; L-arginine biosynthesis; carbamoyl phosphate from bicarbonate: step 1/1. It participates in pyrimidine metabolism; UMP biosynthesis via de novo pathway; (S)-dihydroorotate from bicarbonate: step 1/3. Functionally, small subunit of the glutamine-dependent carbamoyl phosphate synthetase (CPSase). CPSase catalyzes the formation of carbamoyl phosphate from the ammonia moiety of glutamine, carbonate, and phosphate donated by ATP, constituting the first step of 2 biosynthetic pathways, one leading to arginine and/or urea and the other to pyrimidine nucleotides. The small subunit (glutamine amidotransferase) binds and cleaves glutamine to supply the large subunit with the substrate ammonia. The protein is Carbamoyl phosphate synthase small chain of Symbiobacterium thermophilum (strain DSM 24528 / JCM 14929 / IAM 14863 / T).